The chain runs to 399 residues: All trans-polyprenyl-diphosphate synthase PDSS2 (399 aa).

It belongs to the FPP/GGPP synthase family. As to quaternary structure, heterotetramer composed of 2 PDSS1/DPS1 and 2 PDSS2/DLP1 subunits.

It localises to the mitochondrion. It carries out the reaction 7 isopentenyl diphosphate + (2E,6E)-farnesyl diphosphate = all-trans-decaprenyl diphosphate + 7 diphosphate. It catalyses the reaction 6 isopentenyl diphosphate + (2E,6E)-farnesyl diphosphate = all-trans-nonaprenyl diphosphate + 6 diphosphate. It functions in the pathway cofactor biosynthesis; ubiquinone biosynthesis. Functionally, heterotetrameric enzyme that catalyzes the condensation of farnesyl diphosphate (FPP), which acts as a primer, and isopentenyl diphosphate (IPP) to produce prenyl diphosphates of varying chain lengths and participates in the determination of the side chain of ubiquinone. Supplies nona and decaprenyl diphosphate, the precursors for the side chain of the isoprenoid quinones ubiquinone-9 (Q9) and ubiquinone-10 (Q10) respectively. The enzyme adds isopentenyl diphosphate molecules sequentially to farnesyl diphosphate with trans stereochemistry. May play a role during cerebellar development. May regulate mitochondrial respiratory chain function. This is All trans-polyprenyl-diphosphate synthase PDSS2 from Homo sapiens (Human).